The chain runs to 312 residues: Ribosomal RNA small subunit methyltransferase H (312 aa).

S-adenosyl-L-methionine is bound by residues 33–35, Asp-53, Phe-80, Asp-101, and Gln-108; that span reads GGH.

It belongs to the methyltransferase superfamily. RsmH family.

It is found in the cytoplasm. It carries out the reaction cytidine(1402) in 16S rRNA + S-adenosyl-L-methionine = N(4)-methylcytidine(1402) in 16S rRNA + S-adenosyl-L-homocysteine + H(+). Its function is as follows. Specifically methylates the N4 position of cytidine in position 1402 (C1402) of 16S rRNA. This is Ribosomal RNA small subunit methyltransferase H from Desulfosudis oleivorans (strain DSM 6200 / JCM 39069 / Hxd3) (Desulfococcus oleovorans).